Reading from the N-terminus, the 279-residue chain is Thermitase (279 aa).

Asp-5 contacts Ca(2+). A Peptidase S8 domain is found at 12–277; sequence QYGPQKIQAP…KGRVNAYKAV (266 aa). Asp-38 serves as the catalytic Charge relay system. Ca(2+) is bound by residues Asp-47, Asp-57, Asp-60, Asp-62, Thr-64, and Gln-66. His-71 acts as the Charge relay system in catalysis. Ca(2+) contacts are provided by Val-82, Asn-85, Thr-87, and Ile-89. The Na(+) site is built by Ala-173, Tyr-175, and Ala-178. Ca(2+) is bound by residues Val-199 and Asp-201. Asp-201 is a Na(+) binding site. Ser-225 (charge relay system) is an active-site residue.

Belongs to the peptidase S8 family. Ca(2+) is required as a cofactor. Na(+) serves as cofactor.

It localises to the secreted. It catalyses the reaction Hydrolysis of proteins, including collagen.. The chain is Thermitase from Thermoactinomyces vulgaris.